The sequence spans 289 residues: Porin (289 aa).

Homotrimer.

Its subcellular location is the cell outer membrane. Functionally, forms channels that allow the passive diffusion of small hydrophilic solutes up to an exclusion limit of about 0.6 kDa. The chain is Porin (opmA) from Fuscovulum blasticum (Rhodobacter blasticus).